A 348-amino-acid polypeptide reads, in one-letter code: Methylthioribose-1-phosphate isomerase (348 aa).

Substrate is bound by residues 46-48 (RGA), R88, and Q194. Catalysis depends on D235, which acts as the Proton donor. 245 to 246 (NK) lines the substrate pocket.

The protein belongs to the eIF-2B alpha/beta/delta subunits family. MtnA subfamily.

It catalyses the reaction 5-(methylsulfanyl)-alpha-D-ribose 1-phosphate = 5-(methylsulfanyl)-D-ribulose 1-phosphate. It participates in amino-acid biosynthesis; L-methionine biosynthesis via salvage pathway; L-methionine from S-methyl-5-thio-alpha-D-ribose 1-phosphate: step 1/6. Catalyzes the interconversion of methylthioribose-1-phosphate (MTR-1-P) into methylthioribulose-1-phosphate (MTRu-1-P). The protein is Methylthioribose-1-phosphate isomerase of Desulforudis audaxviator (strain MP104C).